We begin with the raw amino-acid sequence, 712 residues long: Asp/Glu-specific dipeptidyl-peptidase (712 aa).

An N-terminal signal peptide occupies residues 1–18; that stretch reads MKRFFKMALFLGVSALYG. Residues His-84, Asp-220, and Ser-647 each act as charge relay system in the active site.

It belongs to the peptidase S46 family.

Its function is as follows. Catalyzes the removal of dipeptides from the N-terminus of oligopeptides. Shows a strict specificity for acidic residues (Asp or Glu) in the P1 position, and has probably a hydrophobic residue preference at the P2 position. Preferentially cleaves the synthetic substrate Leu-Asp-methylcoumaryl-7-amide (Leu-Asp-MCA) as compared to Leu-Glu-MCA. The chain is Asp/Glu-specific dipeptidyl-peptidase (dpp11) from Capnocytophaga gingivalis.